A 158-amino-acid chain; its full sequence is Transcription elongation factor GreB (158 aa).

It belongs to the GreA/GreB family. GreB subfamily.

Functionally, necessary for efficient RNA polymerase transcription elongation past template-encoded arresting sites. The arresting sites in DNA have the property of trapping a certain fraction of elongating RNA polymerases that pass through, resulting in locked ternary complexes. Cleavage of the nascent transcript by cleavage factors such as GreA or GreB allows the resumption of elongation from the new 3'terminus. GreB releases sequences of up to 9 nucleotides in length. The chain is Transcription elongation factor GreB from Escherichia coli O157:H7.